Reading from the N-terminus, the 368-residue chain is tRNA/tmRNA (uracil-C(5))-methyltransferase (368 aa).

S-adenosyl-L-methionine is bound by residues glutamine 190, tyrosine 218, asparagine 223, glutamate 239, and aspartate 301. Catalysis depends on cysteine 326, which acts as the Nucleophile. Glutamate 360 serves as the catalytic Proton acceptor.

Belongs to the class I-like SAM-binding methyltransferase superfamily. RNA M5U methyltransferase family. TrmA subfamily.

It carries out the reaction uridine(54) in tRNA + S-adenosyl-L-methionine = 5-methyluridine(54) in tRNA + S-adenosyl-L-homocysteine + H(+). The catalysed reaction is uridine(341) in tmRNA + S-adenosyl-L-methionine = 5-methyluridine(341) in tmRNA + S-adenosyl-L-homocysteine + H(+). Functionally, dual-specificity methyltransferase that catalyzes the formation of 5-methyluridine at position 54 (m5U54) in all tRNAs, and that of position 341 (m5U341) in tmRNA (transfer-mRNA). The polypeptide is tRNA/tmRNA (uracil-C(5))-methyltransferase (Aliivibrio fischeri (strain MJ11) (Vibrio fischeri)).